A 223-amino-acid chain; its full sequence is ATP-dependent dethiobiotin synthetase BioD (223 aa).

Thr16 is a binding site for Mg(2+). Residue Lys37 is part of the active site. Position 41 (Ser41) interacts with substrate. Residues Asp50 and Glu111 each contribute to the Mg(2+) site. Residues Asp50, 111 to 114 (EGAG), and 171 to 172 (NR) contribute to the ATP site.

Belongs to the dethiobiotin synthetase family. In terms of assembly, homodimer. Mg(2+) serves as cofactor.

Its subcellular location is the cytoplasm. The enzyme catalyses (7R,8S)-7,8-diammoniononanoate + CO2 + ATP = (4R,5S)-dethiobiotin + ADP + phosphate + 3 H(+). The protein operates within cofactor biosynthesis; biotin biosynthesis; biotin from 7,8-diaminononanoate: step 1/2. Its function is as follows. Catalyzes a mechanistically unusual reaction, the ATP-dependent insertion of CO2 between the N7 and N8 nitrogen atoms of 7,8-diaminopelargonic acid (DAPA, also called 7,8-diammoniononanoate) to form a ureido ring. This is ATP-dependent dethiobiotin synthetase BioD from Anaeromyxobacter sp. (strain K).